A 634-amino-acid chain; its full sequence is Chaperone protein HtpG (634 aa).

Residues Met-1–Arg-342 form an a; substrate-binding region. Residues Glu-343–Gln-559 form a b region. The segment at Ile-560–Ala-634 is c.

It belongs to the heat shock protein 90 family. As to quaternary structure, homodimer.

The protein localises to the cytoplasm. Molecular chaperone. Has ATPase activity. This is Chaperone protein HtpG from Pseudomonas putida (strain ATCC 47054 / DSM 6125 / CFBP 8728 / NCIMB 11950 / KT2440).